The primary structure comprises 476 residues: Cytosolic Fe-S cluster assembly factor narfl (476 aa).

8 residues coordinate [4Fe-4S] cluster: Cys-24, Cys-71, Cys-74, Cys-77, Cys-190, Cys-246, Cys-395, and Cys-399.

Belongs to the NARF family. As to quaternary structure, component of the CIA complex.

Component of the cytosolic iron-sulfur protein assembly (CIA) complex, a multiprotein complex that mediates the incorporation of iron-sulfur cluster into extramitochondrial Fe/S proteins. The sequence is that of Cytosolic Fe-S cluster assembly factor narfl (narfl) from Xenopus tropicalis (Western clawed frog).